The chain runs to 87 residues: Acyl carrier protein 3 (87 aa).

The 79-residue stretch at 1–79 folds into the Carrier domain; that stretch reads MSNPTVLDQI…DLVTYIEAAL (79 aa). Position 39 is an O-(pantetheine 4'-phosphoryl)serine (serine 39).

Belongs to the acyl carrier protein (ACP) family. 4'-phosphopantetheine is transferred from CoA to a specific serine of apo-ACP by AcpS. This modification is essential for activity because fatty acids are bound in thioester linkage to the sulfhydryl of the prosthetic group.

It localises to the cytoplasm. The protein operates within lipid metabolism; fatty acid biosynthesis. In terms of biological role, carrier of the growing fatty acid chain in fatty acid biosynthesis. This is Acyl carrier protein 3 from Ralstonia nicotianae (strain ATCC BAA-1114 / GMI1000) (Ralstonia solanacearum).